We begin with the raw amino-acid sequence, 107 residues long: Ribonuclease P protein component 4 (107 aa).

Residues cysteine 66, cysteine 69, cysteine 92, and cysteine 95 each coordinate Zn(2+).

The protein belongs to the eukaryotic/archaeal RNase P protein component 4 family. As to quaternary structure, consists of a catalytic RNA component and at least 4-5 protein subunits. Zn(2+) is required as a cofactor.

It is found in the cytoplasm. The enzyme catalyses Endonucleolytic cleavage of RNA, removing 5'-extranucleotides from tRNA precursor.. Functionally, part of ribonuclease P, a protein complex that generates mature tRNA molecules by cleaving their 5'-ends. The sequence is that of Ribonuclease P protein component 4 from Methanosarcina mazei (strain ATCC BAA-159 / DSM 3647 / Goe1 / Go1 / JCM 11833 / OCM 88) (Methanosarcina frisia).